A 162-amino-acid polypeptide reads, in one-letter code: Zinc finger protein ZAT12 (162 aa).

2 consecutive C2H2-type zinc fingers follow at residues 39–61 (FTCK…RASH) and 82–104 (HPCP…MRRH).

In terms of tissue distribution, expressed in roots, stems and flowers.

The protein localises to the nucleus. In terms of biological role, transcriptional repressor involved in light acclimation, cold and oxidative stress responses. May regulate a collection of transcripts involved in response to high-light, cold and oxidative stress. The chain is Zinc finger protein ZAT12 (ZAT12) from Arabidopsis thaliana (Mouse-ear cress).